Consider the following 142-residue polypeptide: Large ribosomal subunit protein uL11 (142 aa).

Belongs to the universal ribosomal protein uL11 family. Part of the ribosomal stalk of the 50S ribosomal subunit. Interacts with L10 and the large rRNA to form the base of the stalk. L10 forms an elongated spine to which L12 dimers bind in a sequential fashion forming a multimeric L10(L12)X complex. One or more lysine residues are methylated.

Forms part of the ribosomal stalk which helps the ribosome interact with GTP-bound translation factors. The protein is Large ribosomal subunit protein uL11 of Baumannia cicadellinicola subsp. Homalodisca coagulata.